The chain runs to 311 residues: HTH-type transcriptional regulator PcaQ (311 aa).

Residues 6 to 63 (IKFRHLQTFVEVARQKSVIRAAEILHVSQPAVTKTIRELEDVLGVSLLEREGRGIRIS) enclose the HTH lysR-type domain. Residues 23 to 42 (VIRAAEILHVSQPAVTKTIR) constitute a DNA-binding region (H-T-H motif).

Belongs to the LysR transcriptional regulatory family.

Its function is as follows. Activates transcription of the pcaDCHGB operon for the catabolism of the phenolic compound protocatechuate. This is HTH-type transcriptional regulator PcaQ (pcaQ) from Agrobacterium fabrum (strain C58 / ATCC 33970) (Agrobacterium tumefaciens (strain C58)).